A 129-amino-acid polypeptide reads, in one-letter code: Small ribosomal subunit protein uS11 (129 aa).

This sequence belongs to the universal ribosomal protein uS11 family. Part of the 30S ribosomal subunit. Interacts with proteins S7 and S18. Binds to IF-3.

Functionally, located on the platform of the 30S subunit, it bridges several disparate RNA helices of the 16S rRNA. Forms part of the Shine-Dalgarno cleft in the 70S ribosome. This Pseudomonas fluorescens (strain SBW25) protein is Small ribosomal subunit protein uS11.